Here is a 231-residue protein sequence, read N- to C-terminus: PIAGSMVLAAILLKLGGYGIIRMMQIMPTTKTDTFLPFLVLALWGAILANLTCLQQTDLKSLIAYSSISHMGLVVAAIIIQTPWGLSGAMALMIAHGFTSSALFCLANTTYERTHTRILILTRGFHNILPMATTWWLLTNLMNIATPPTMNFTSELLIMSTLFNWCPTTIILLGLSMLITASYSLHMFLSTQTGYPLLNNQTEPTHTREHLLMILHIVPLMMISMKPELVI.

The next 6 membrane-spanning stretches (helical) occupy residues 1 to 21 (PIAGSMVLAAILLKLGGYGII), 34 to 54 (TFLPFLVLALWGAILANLTCL), 61 to 80 (SLIAYSSISHMGLVVAAIII), 84 to 106 (WGLSGAMALMIAHGFTSSALFCL), 118 to 138 (ILILTRGFHNILPMATTWWLL), and 156 to 178 (LLIMSTLFNWCPTTIILLGLSML).

It belongs to the complex I subunit 4 family.

The protein resides in the mitochondrion membrane. It catalyses the reaction a ubiquinone + NADH + 5 H(+)(in) = a ubiquinol + NAD(+) + 4 H(+)(out). Functionally, core subunit of the mitochondrial membrane respiratory chain NADH dehydrogenase (Complex I) that is believed to belong to the minimal assembly required for catalysis. Complex I functions in the transfer of electrons from NADH to the respiratory chain. The immediate electron acceptor for the enzyme is believed to be ubiquinone. The protein is NADH-ubiquinone oxidoreductase chain 4 (MT-ND4) of Trimeresurus albolabris (White-lipped pit viper).